The primary structure comprises 336 residues: Inositol 2-dehydrogenase (336 aa).

It belongs to the Gfo/Idh/MocA family. Homotetramer.

It catalyses the reaction myo-inositol + NAD(+) = scyllo-inosose + NADH + H(+). In terms of biological role, involved in the oxidation of myo-inositol (MI) to 2-keto-myo-inositol (2KMI or 2-inosose). The chain is Inositol 2-dehydrogenase from Acidiphilium cryptum (strain JF-5).